The primary structure comprises 264 residues: Thymidylate synthase (264 aa).

Arginine 21 provides a ligand contact to dUMP. Residue histidine 51 participates in (6R)-5,10-methylene-5,6,7,8-tetrahydrofolate binding. 126–127 is a binding site for dUMP; it reads RR. Cysteine 146 (nucleophile) is an active-site residue. Residues 166–169, asparagine 177, and 207–209 each bind dUMP; these read RSVD and HLY. Aspartate 169 contacts (6R)-5,10-methylene-5,6,7,8-tetrahydrofolate. Residue alanine 263 coordinates (6R)-5,10-methylene-5,6,7,8-tetrahydrofolate.

This sequence belongs to the thymidylate synthase family. Bacterial-type ThyA subfamily. In terms of assembly, homodimer.

It localises to the cytoplasm. The catalysed reaction is dUMP + (6R)-5,10-methylene-5,6,7,8-tetrahydrofolate = 7,8-dihydrofolate + dTMP. The protein operates within pyrimidine metabolism; dTTP biosynthesis. In terms of biological role, catalyzes the reductive methylation of 2'-deoxyuridine-5'-monophosphate (dUMP) to 2'-deoxythymidine-5'-monophosphate (dTMP) while utilizing 5,10-methylenetetrahydrofolate (mTHF) as the methyl donor and reductant in the reaction, yielding dihydrofolate (DHF) as a by-product. This enzymatic reaction provides an intracellular de novo source of dTMP, an essential precursor for DNA biosynthesis. This Geobacillus kaustophilus (strain HTA426) protein is Thymidylate synthase.